The primary structure comprises 4563 residues: Apolipoprotein B-100 (4563 aa).

Positions 1-27 (MDPPRPALLALLALPALLLLLLAGARA) are cleaved as a signal peptide. The heparin-binding stretch occupies residues 32–126 (LENVSLVCPK…KNSEEFAAAM (95 aa)). Asparagine 34 carries N-linked (GlcNAc...) asparagine glycosylation. Disulfide bonds link cysteine 39–cysteine 88 and cysteine 78–cysteine 97. The Vitellogenin domain occupies 46 to 672 (FKHLRKYTYN…PNNYLPKESM (627 aa)). The N-linked (GlcNAc...) asparagine glycan is linked to asparagine 185. Disulfide bonds link cysteine 186–cysteine 212, cysteine 245–cysteine 261, cysteine 385–cysteine 390, and cysteine 478–cysteine 513. Residues 232–306 (TRPLSTLISS…RFFGEGTKKM (75 aa)) form a heparin-binding region. The tract at residues 902–959 (NTNFFHESGLEAHVALKAGKLKFIIPSPKRPVKLLSGGNTLHLVSTTKTEVIPPLIEN) is heparin-binding. A disulfide bridge connects residues cysteine 966 and cysteine 976. Asparagine 983 carries an N-linked (GlcNAc...) asparagine glycan. Cysteine 1112 carries S-palmitoyl cysteine lipidation. Asparagine 1368, asparagine 1377, and asparagine 1523 each carry an N-linked (GlcNAc...) asparagine glycan. Lysine 2004 bears the N6-acetyllysine mark. The tract at residues 2043-2178 (RDAVEKPQEF…EKLSQLQTYM (136 aa)) is heparin-binding. N-linked (GlcNAc...) asparagine glycosylation is found at asparagine 2239, asparagine 2560, asparagine 2779, asparagine 2982, and asparagine 3101. A heparin-binding region spans residues 3161–3236 (FLKTTKQSFD…KIKFDKYKAE (76 aa)). The interval 3174-3184 (KAQYKKNKHRH) is basic (possible receptor binding region). Cysteine 3194 and cysteine 3324 are disulfide-bonded. Residue asparagine 3224 is glycosylated (N-linked (GlcNAc...) asparagine). Serine 3279 carries the phosphoserine modification. Residues asparagine 3336 and asparagine 3358 are each glycosylated (N-linked (GlcNAc...) asparagine). Positions 3373-3393 (VIDALQYKLEGTTRLTRKRGL) are LDL receptor binding. The interval 3383–3516 (GTTRLTRKRG…REYSGTIASE (134 aa)) is heparin-binding. Residues 3386 to 3394 (RLTRKRGLK) form a basic (possible receptor binding region) region. 3 N-linked (GlcNAc...) asparagine glycosylation sites follow: asparagine 3411, asparagine 3465, and asparagine 3895. Residue serine 4048 is modified to Phosphoserine; by FAM20C. At threonine 4052 the chain carries Phosphothreonine. 2 N-linked (GlcNAc...) asparagine glycosylation sites follow: asparagine 4237 and asparagine 4431.

As to quaternary structure, interacts with PCSK9. Interacts with MTTP. Interacts with AUP1. Interacts with CIDEB. Palmitoylated; structural requirement for proper assembly of the hydrophobic core of the lipoprotein particle.

The protein resides in the cytoplasm. The protein localises to the secreted. Its subcellular location is the lipid droplet. Functionally, apolipoprotein B is a major protein constituent of chylomicrons (apo B-48), LDL (apo B-100) and VLDL (apo B-100). Apo B-100 functions as a recognition signal for the cellular binding and internalization of LDL particles by the apoB/E receptor. The chain is Apolipoprotein B-100 (APOB) from Homo sapiens (Human).